The primary structure comprises 261 residues: Cytochrome c oxidase subunit 3 (261 aa).

The Mitochondrial matrix segment spans residues 1–15 (MAHQAHAYHMVDPSP). The helical transmembrane segment at 16–34 (WPLTGAVAALLLTSGLAVW) threads the bilayer. Residues 35–40 (FHFKSL) are Mitochondrial intermembrane-facing. A helical transmembrane segment spans residues 41-66 (TLLAMGLLLMILTMIQWWRDIIREGT). Over 67 to 72 (FQGHHT) the chain is Mitochondrial matrix. A helical membrane pass occupies residues 73–105 (PPVQKGLRYGMILFITSEVFFFLGFFWAFYHSS). Residues 106–128 (LAPTPELGGIWPPTGITPLDPFE) lie on the Mitochondrial intermembrane side of the membrane. A helical transmembrane segment spans residues 129–152 (VPLLNTAVLLASGVTVTWTHHSLM). The Mitochondrial matrix segment spans residues 153-155 (EGK). A helical membrane pass occupies residues 156–183 (RTEATQALTLTILLGLYFTALQAMEYYE). At 184 to 190 (APFTIAD) the chain is on the mitochondrial intermembrane side. Residues 191-223 (GVYGTTFFVATGFHGLHVIIGSTFLAGCLLRQI) form a helical membrane-spanning segment. The Mitochondrial matrix segment spans residues 224–232 (LYHFTSSHH). Residues 233–256 (FGFEAAAWYWHFVDVVWLFLYVSI) form a helical membrane-spanning segment. At 257-261 (YWWGS) the chain is on the mitochondrial intermembrane side.

This sequence belongs to the cytochrome c oxidase subunit 3 family. In terms of assembly, component of the cytochrome c oxidase (complex IV, CIV), a multisubunit enzyme composed of 14 subunits. The complex is composed of a catalytic core of 3 subunits MT-CO1, MT-CO2 and MT-CO3, encoded in the mitochondrial DNA, and 11 supernumerary subunits COX4I, COX5A, COX5B, COX6A, COX6B, COX6C, COX7A, COX7B, COX7C, COX8 and NDUFA4, which are encoded in the nuclear genome. The complex exists as a monomer or a dimer and forms supercomplexes (SCs) in the inner mitochondrial membrane with NADH-ubiquinone oxidoreductase (complex I, CI) and ubiquinol-cytochrome c oxidoreductase (cytochrome b-c1 complex, complex III, CIII), resulting in different assemblies (supercomplex SCI(1)III(2)IV(1) and megacomplex MCI(2)III(2)IV(2)).

The protein localises to the mitochondrion inner membrane. The enzyme catalyses 4 Fe(II)-[cytochrome c] + O2 + 8 H(+)(in) = 4 Fe(III)-[cytochrome c] + 2 H2O + 4 H(+)(out). In terms of biological role, component of the cytochrome c oxidase, the last enzyme in the mitochondrial electron transport chain which drives oxidative phosphorylation. The respiratory chain contains 3 multisubunit complexes succinate dehydrogenase (complex II, CII), ubiquinol-cytochrome c oxidoreductase (cytochrome b-c1 complex, complex III, CIII) and cytochrome c oxidase (complex IV, CIV), that cooperate to transfer electrons derived from NADH and succinate to molecular oxygen, creating an electrochemical gradient over the inner membrane that drives transmembrane transport and the ATP synthase. Cytochrome c oxidase is the component of the respiratory chain that catalyzes the reduction of oxygen to water. Electrons originating from reduced cytochrome c in the intermembrane space (IMS) are transferred via the dinuclear copper A center (CU(A)) of subunit 2 and heme A of subunit 1 to the active site in subunit 1, a binuclear center (BNC) formed by heme A3 and copper B (CU(B)). The BNC reduces molecular oxygen to 2 water molecules using 4 electrons from cytochrome c in the IMS and 4 protons from the mitochondrial matrix. In Polypterus ornatipinnis (Ornate bichir), this protein is Cytochrome c oxidase subunit 3 (mt-co3).